Consider the following 168-residue polypeptide: Ribulose bisphosphate carboxylase small subunit, chloroplastic (168 aa).

The N-terminal 28 residues, 1–28, are a transit peptide targeting the chloroplast; that stretch reads MASIAAKSVSLRAATRRAAPVAAPADAR.

Belongs to the RuBisCO small chain family. Heterohexadecamer of 8 large and 8 small subunits.

The protein localises to the plastid. The protein resides in the chloroplast. Its function is as follows. RuBisCO catalyzes two reactions: the carboxylation of D-ribulose 1,5-bisphosphate, the primary event in carbon dioxide fixation, as well as the oxidative fragmentation of the pentose substrate. Both reactions occur simultaneously and in competition at the same active site. Although the small subunit is not catalytic it is essential for maximal activity. In Chlamydomonas moewusii (Chlamydomonas eugametos), this protein is Ribulose bisphosphate carboxylase small subunit, chloroplastic.